The primary structure comprises 333 residues: Adenosine deaminase (333 aa).

The Zn(2+) site is built by His12 and His14. His14, Asp16, and Gly170 together coordinate substrate. Residue His197 participates in Zn(2+) binding. Catalysis depends on Glu200, which acts as the Proton donor. Asp278 is a Zn(2+) binding site. Position 279 (Asp279) interacts with substrate.

Belongs to the metallo-dependent hydrolases superfamily. Adenosine and AMP deaminases family. Adenosine deaminase subfamily. Zn(2+) serves as cofactor.

The catalysed reaction is adenosine + H2O + H(+) = inosine + NH4(+). It catalyses the reaction 2'-deoxyadenosine + H2O + H(+) = 2'-deoxyinosine + NH4(+). In terms of biological role, catalyzes the hydrolytic deamination of adenosine and 2-deoxyadenosine. The sequence is that of Adenosine deaminase from Shigella flexneri serotype 5b (strain 8401).